We begin with the raw amino-acid sequence, 428 residues long: Trigger factor (428 aa).

Residues 163–248 (KDIVTIDFEG…VKEIKAKELP (86 aa)) form the PPIase FKBP-type domain.

It belongs to the FKBP-type PPIase family. Tig subfamily.

The protein localises to the cytoplasm. The catalysed reaction is [protein]-peptidylproline (omega=180) = [protein]-peptidylproline (omega=0). Involved in protein export. Acts as a chaperone by maintaining the newly synthesized protein in an open conformation. Functions as a peptidyl-prolyl cis-trans isomerase. This is Trigger factor from Lachnoclostridium phytofermentans (strain ATCC 700394 / DSM 18823 / ISDg) (Clostridium phytofermentans).